Consider the following 244-residue polypeptide: ATP synthase subunit a (244 aa).

6 helical membrane-spanning segments follow: residues 25-45, 85-105, 115-135, 144-164, 193-213, and 216-236; these read ISFT…LLIF, YFAF…FGMI, IIVT…IGFM, LFVP…IEII, GFVI…SVAL, and LEIL…CIYL.

The protein belongs to the ATPase A chain family. F-type ATPases have 2 components, CF(1) - the catalytic core - and CF(0) - the membrane proton channel. CF(1) has five subunits: alpha(3), beta(3), gamma(1), delta(1), epsilon(1). CF(0) has three main subunits: a(1), b(2) and c(9-12). The alpha and beta chains form an alternating ring which encloses part of the gamma chain. CF(1) is attached to CF(0) by a central stalk formed by the gamma and epsilon chains, while a peripheral stalk is formed by the delta and b chains.

It localises to the cell inner membrane. Functionally, key component of the proton channel; it plays a direct role in the translocation of protons across the membrane. In Pelagibacter ubique (strain HTCC1062), this protein is ATP synthase subunit a.